The following is a 385-amino-acid chain: GDSL esterase/lipase 5 (385 aa).

An N-terminal signal peptide occupies residues 1 to 35 (MRESTLMEKVTRRTISSFIFFIVSSTILFLAGKSS). The N-linked (GlcNAc...) asparagine glycan is linked to Asn-45. Residue Ser-55 is the Nucleophile of the active site. 4 N-linked (GlcNAc...) asparagine glycosylation sites follow: Asn-66, Asn-194, Asn-211, and Asn-289. Active-site residues include Asp-345 and His-348.

This sequence belongs to the 'GDSL' lipolytic enzyme family.

It localises to the secreted. This is GDSL esterase/lipase 5 (GLIP5) from Arabidopsis thaliana (Mouse-ear cress).